Reading from the N-terminus, the 467-residue chain is DNA polymerase IV (467 aa).

The UmuC domain maps to 5 to 187; the sequence is VLHIDMDAFF…LPVGALWGVG (183 aa). D9 and D104 together coordinate Mg(2+). E105 is a catalytic residue. 2 disordered regions span residues 364 to 386 and 428 to 449; these read PDTD…VEAP and TKGR…DPLD.

The protein belongs to the DNA polymerase type-Y family. As to quaternary structure, monomer. Requires Mg(2+) as cofactor.

It localises to the cytoplasm. It catalyses the reaction DNA(n) + a 2'-deoxyribonucleoside 5'-triphosphate = DNA(n+1) + diphosphate. Functionally, poorly processive, error-prone DNA polymerase involved in untargeted mutagenesis. Copies undamaged DNA at stalled replication forks, which arise in vivo from mismatched or misaligned primer ends. These misaligned primers can be extended by PolIV. Exhibits no 3'-5' exonuclease (proofreading) activity. May be involved in translesional synthesis, in conjunction with the beta clamp from PolIII. The sequence is that of DNA polymerase IV from Corynebacterium glutamicum (strain R).